Reading from the N-terminus, the 194-residue chain is ATP-dependent Clp protease proteolytic subunit 1 (194 aa).

Ser99 acts as the Nucleophile in catalysis. His124 is a catalytic residue.

Belongs to the peptidase S14 family. In terms of assembly, fourteen ClpP subunits assemble into 2 heptameric rings which stack back to back to give a disk-like structure with a central cavity, resembling the structure of eukaryotic proteasomes.

Its subcellular location is the cytoplasm. It catalyses the reaction Hydrolysis of proteins to small peptides in the presence of ATP and magnesium. alpha-casein is the usual test substrate. In the absence of ATP, only oligopeptides shorter than five residues are hydrolyzed (such as succinyl-Leu-Tyr-|-NHMec, and Leu-Tyr-Leu-|-Tyr-Trp, in which cleavage of the -Tyr-|-Leu- and -Tyr-|-Trp bonds also occurs).. In terms of biological role, cleaves peptides in various proteins in a process that requires ATP hydrolysis. Has a chymotrypsin-like activity. Plays a major role in the degradation of misfolded proteins. The polypeptide is ATP-dependent Clp protease proteolytic subunit 1 (Borreliella burgdorferi (strain ATCC 35210 / DSM 4680 / CIP 102532 / B31) (Borrelia burgdorferi)).